The primary structure comprises 131 residues: Small ribosomal subunit protein uS11 (131 aa).

This sequence belongs to the universal ribosomal protein uS11 family. In terms of assembly, part of the 30S ribosomal subunit. Interacts with proteins S7 and S18. Binds to IF-3.

Its function is as follows. Located on the platform of the 30S subunit, it bridges several disparate RNA helices of the 16S rRNA. Forms part of the Shine-Dalgarno cleft in the 70S ribosome. This chain is Small ribosomal subunit protein uS11, found in Clostridium novyi (strain NT).